Reading from the N-terminus, the 194-residue chain is Flavin prenyltransferase UbiX (194 aa).

Residues 9 to 11, Ser-35, 86 to 89, and Arg-121 contribute to the FMN site; these read GAS and SIKT. Dimethylallyl phosphate is bound by residues Tyr-151 and Lys-167.

The protein belongs to the UbiX/PAD1 family.

The catalysed reaction is dimethylallyl phosphate + FMNH2 = prenylated FMNH2 + phosphate. Involved in the carboxylation of phenylphosphate. In terms of biological role, flavin prenyltransferase that catalyzes the synthesis of the prenylated FMN cofactor (prenyl-FMN) for 4-hydroxy-3-polyprenylbenzoic acid decarboxylase UbiD. The prenyltransferase is metal-independent and links a dimethylallyl moiety from dimethylallyl monophosphate (DMAP) to the flavin N5 and C6 atoms of FMN. The polypeptide is Flavin prenyltransferase UbiX (Thauera aromatica).